The following is a 291-amino-acid chain: ATP phosphoribosyltransferase (291 aa).

Belongs to the ATP phosphoribosyltransferase family. Long subfamily. Mg(2+) is required as a cofactor.

It is found in the cytoplasm. It catalyses the reaction 1-(5-phospho-beta-D-ribosyl)-ATP + diphosphate = 5-phospho-alpha-D-ribose 1-diphosphate + ATP. Its pathway is amino-acid biosynthesis; L-histidine biosynthesis; L-histidine from 5-phospho-alpha-D-ribose 1-diphosphate: step 1/9. With respect to regulation, feedback inhibited by histidine. Its function is as follows. Catalyzes the condensation of ATP and 5-phosphoribose 1-diphosphate to form N'-(5'-phosphoribosyl)-ATP (PR-ATP). Has a crucial role in the pathway because the rate of histidine biosynthesis seems to be controlled primarily by regulation of HisG enzymatic activity. This chain is ATP phosphoribosyltransferase, found in Geotalea uraniireducens (strain Rf4) (Geobacter uraniireducens).